A 167-amino-acid chain; its full sequence is E1B protein, small T-antigen (167 aa).

The segment at 143–167 is disordered; it reads GLDPVQEEEEEEENLRAGLDPSTEL.

This sequence belongs to the adenoviridae E1B 19 kDa protein family.

The protein localises to the host cell membrane. It localises to the host nucleus envelope. It is found in the host nucleus lamina. Its function is as follows. Putative adenovirus Bcl-2 homolog that inhibits apoptosis induced by TNF or FAS pathways, as well as p53-mediated apoptosis. Without E1B 19K function, virus production is compromised because of premature death of host cell. Interacts with Bax protein in cell lysates. In Human adenovirus F serotype 40 (HAdV-40), this protein is E1B protein, small T-antigen.